Reading from the N-terminus, the 346-residue chain is MTEQRTIASSATREDEAADASIRPKRLADYLGQQPVRDQMEIYIQAAKARGEAMDHVLIFGPPGLGKTTLSHVIANELGVNLRVTSGPVIEKAGDLAALLTNLQPHDVLFIDEIHRLSPVVEEVLYPAMEDFQIDIMIGDGPAARSIKIDLPPFTLIGATTRAGLLTAPLRDRFGIVQRLEFYSPQELTRIVIRSAAILGIDCTPDGAAEIARRARGTPRIANRLLRRVRDFAQVKAAGHIDLAVAQAAMQMLKVDPEGFDELDRRMLRTIVDHFDGGPVGVESLAASLSEERGTLEDVIEPYLIQQGFLIRTARGRMVTPKAYLHLGLKPPRDRAPAIGEPGDLF.

Residues 1–11 (MTEQRTIASSA) are compositionally biased toward polar residues. A disordered region spans residues 1–20 (MTEQRTIASSATREDEAADA). Residues 1-183 (MTEQRTIASS…FGIVQRLEFY (183 aa)) form a large ATPase domain (RuvB-L) region. Residues I22, R23, G64, K67, T68, T69, 130–132 (EDF), R173, Y183, and R220 contribute to the ATP site. A Mg(2+)-binding site is contributed by T68. The tract at residues 184 to 254 (SPQELTRIVI…VAQAAMQMLK (71 aa)) is small ATPAse domain (RuvB-S). Positions 257 to 346 (PEGFDELDRR…PAIGEPGDLF (90 aa)) are head domain (RuvB-H). R293, R312, and R317 together coordinate DNA.

This sequence belongs to the RuvB family. In terms of assembly, homohexamer. Forms an RuvA(8)-RuvB(12)-Holliday junction (HJ) complex. HJ DNA is sandwiched between 2 RuvA tetramers; dsDNA enters through RuvA and exits via RuvB. An RuvB hexamer assembles on each DNA strand where it exits the tetramer. Each RuvB hexamer is contacted by two RuvA subunits (via domain III) on 2 adjacent RuvB subunits; this complex drives branch migration. In the full resolvosome a probable DNA-RuvA(4)-RuvB(12)-RuvC(2) complex forms which resolves the HJ.

The protein resides in the cytoplasm. The enzyme catalyses ATP + H2O = ADP + phosphate + H(+). In terms of biological role, the RuvA-RuvB-RuvC complex processes Holliday junction (HJ) DNA during genetic recombination and DNA repair, while the RuvA-RuvB complex plays an important role in the rescue of blocked DNA replication forks via replication fork reversal (RFR). RuvA specifically binds to HJ cruciform DNA, conferring on it an open structure. The RuvB hexamer acts as an ATP-dependent pump, pulling dsDNA into and through the RuvAB complex. RuvB forms 2 homohexamers on either side of HJ DNA bound by 1 or 2 RuvA tetramers; 4 subunits per hexamer contact DNA at a time. Coordinated motions by a converter formed by DNA-disengaged RuvB subunits stimulates ATP hydrolysis and nucleotide exchange. Immobilization of the converter enables RuvB to convert the ATP-contained energy into a lever motion, pulling 2 nucleotides of DNA out of the RuvA tetramer per ATP hydrolyzed, thus driving DNA branch migration. The RuvB motors rotate together with the DNA substrate, which together with the progressing nucleotide cycle form the mechanistic basis for DNA recombination by continuous HJ branch migration. Branch migration allows RuvC to scan DNA until it finds its consensus sequence, where it cleaves and resolves cruciform DNA. The protein is Holliday junction branch migration complex subunit RuvB of Xanthomonas campestris pv. campestris (strain 8004).